The following is a 364-amino-acid chain: Nicotinate-nucleotide--dimethylbenzimidazole phosphoribosyltransferase (364 aa).

The active-site Proton acceptor is E332.

The protein belongs to the CobT family.

It carries out the reaction 5,6-dimethylbenzimidazole + nicotinate beta-D-ribonucleotide = alpha-ribazole 5'-phosphate + nicotinate + H(+). The protein operates within nucleoside biosynthesis; alpha-ribazole biosynthesis; alpha-ribazole from 5,6-dimethylbenzimidazole: step 1/2. Functionally, catalyzes the synthesis of alpha-ribazole-5'-phosphate from nicotinate mononucleotide (NAMN) and 5,6-dimethylbenzimidazole (DMB). The sequence is that of Nicotinate-nucleotide--dimethylbenzimidazole phosphoribosyltransferase from Salinispora tropica (strain ATCC BAA-916 / DSM 44818 / JCM 13857 / NBRC 105044 / CNB-440).